Reading from the N-terminus, the 421-residue chain is Gamma-glutamyl phosphate reductase (421 aa).

It belongs to the gamma-glutamyl phosphate reductase family.

It is found in the cytoplasm. The catalysed reaction is L-glutamate 5-semialdehyde + phosphate + NADP(+) = L-glutamyl 5-phosphate + NADPH + H(+). It participates in amino-acid biosynthesis; L-proline biosynthesis; L-glutamate 5-semialdehyde from L-glutamate: step 2/2. Catalyzes the NADPH-dependent reduction of L-glutamate 5-phosphate into L-glutamate 5-semialdehyde and phosphate. The product spontaneously undergoes cyclization to form 1-pyrroline-5-carboxylate. This is Gamma-glutamyl phosphate reductase from Herminiimonas arsenicoxydans.